Here is a 102-residue protein sequence, read N- to C-terminus: Small ribosomal subunit protein bS18 (102 aa).

It belongs to the bacterial ribosomal protein bS18 family. Part of the 30S ribosomal subunit. Forms a tight heterodimer with protein bS6.

Binds as a heterodimer with protein bS6 to the central domain of the 16S rRNA, where it helps stabilize the platform of the 30S subunit. This Orientia tsutsugamushi (strain Boryong) (Rickettsia tsutsugamushi) protein is Small ribosomal subunit protein bS18.